The primary structure comprises 134 residues: Tripartite terminase subunit 2 (134 aa).

Belongs to the herpesviridae TRM2 protein family. As to quaternary structure, associates with TRM1 and TRM3 to form the tripartite terminase complex.

It localises to the host nucleus. Its function is as follows. Component of the molecular motor that translocates viral genomic DNA in empty capsid during DNA packaging. Forms a tripartite terminase complex together with TRM1 and TRM3 in the host cytoplasm. Once the complex reaches the host nucleus, it interacts with the capsid portal vertex. This portal forms a ring in which genomic DNA is translocated into the capsid. The protein is Tripartite terminase subunit 2 of Gallus gallus (Chicken).